We begin with the raw amino-acid sequence, 523 residues long: BTB/POZ domain-containing protein 3 (523 aa).

The stretch at 85–114 (FDYSPLVLASLCGHEPVVKFLLENGALCER) is one ANK repeat. 2 BTB domains span residues 167 to 223 (TDIV…RYLY) and 306 to 373 (HDAY…DIAP).

In terms of assembly, interacts with cul3. Ubiquitinated and targeted for cul3-dependent degradation.

It is found in the cytoplasm. It participates in protein modification; protein ubiquitination. Its function is as follows. Probable substrate-specific adapter of an E3 ubiquitin-protein ligase complex which mediates the ubiquitination and subsequent proteasomal degradation of target proteins. This Schizosaccharomyces pombe (strain 972 / ATCC 24843) (Fission yeast) protein is BTB/POZ domain-containing protein 3 (btb3).